We begin with the raw amino-acid sequence, 451 residues long: Tubulin alpha-2 chain (451 aa).

Q11 is a GTP binding site. K40 is subject to N6-acetyllysine. E71, G144, T145, T179, N206, and N228 together coordinate GTP. E71 lines the Mg(2+) pocket. E254 is an active-site residue.

The protein belongs to the tubulin family. In terms of assembly, dimer of alpha and beta chains. A typical microtubule is a hollow water-filled tube with an outer diameter of 25 nm and an inner diameter of 15 nM. Alpha-beta heterodimers associate head-to-tail to form protofilaments running lengthwise along the microtubule wall with the beta-tubulin subunit facing the microtubule plus end conferring a structural polarity. Microtubules usually have 13 protofilaments but different protofilament numbers can be found in some organisms and specialized cells. Mg(2+) serves as cofactor. Post-translationally, undergoes a tyrosination/detyrosination cycle, the cyclic removal and re-addition of a C-terminal tyrosine residue by the enzymes tubulin tyrosine carboxypeptidase (TTCP) and tubulin tyrosine ligase (TTL), respectively. In terms of processing, acetylation of alpha chains at Lys-40 stabilizes microtubules and affects affinity and processivity of microtubule motors. This modification has a role in multiple cellular functions, ranging from cell motility, cell cycle progression or cell differentiation to intracellular trafficking and signaling.

The protein localises to the cytoplasm. Its subcellular location is the cytoskeleton. The enzyme catalyses GTP + H2O = GDP + phosphate + H(+). Its function is as follows. Tubulin is the major constituent of microtubules, a cylinder consisting of laterally associated linear protofilaments composed of alpha- and beta-tubulin heterodimers. Microtubules grow by the addition of GTP-tubulin dimers to the microtubule end, where a stabilizing cap forms. Below the cap, tubulin dimers are in GDP-bound state, owing to GTPase activity of alpha-tubulin. This is Tubulin alpha-2 chain (TUBA2) from Zea mays (Maize).